The primary structure comprises 306 residues: Ribosomal protein L11 methyltransferase (306 aa).

Residues Thr-154, Gly-179, Asp-201, and Asn-242 each coordinate S-adenosyl-L-methionine.

The protein belongs to the methyltransferase superfamily. PrmA family.

Its subcellular location is the cytoplasm. The enzyme catalyses L-lysyl-[protein] + 3 S-adenosyl-L-methionine = N(6),N(6),N(6)-trimethyl-L-lysyl-[protein] + 3 S-adenosyl-L-homocysteine + 3 H(+). In terms of biological role, methylates ribosomal protein L11. In Xylella fastidiosa (strain Temecula1 / ATCC 700964), this protein is Ribosomal protein L11 methyltransferase.